The sequence spans 156 residues: SsrA-binding protein (156 aa).

It belongs to the SmpB family.

It is found in the cytoplasm. Functionally, required for rescue of stalled ribosomes mediated by trans-translation. Binds to transfer-messenger RNA (tmRNA), required for stable association of tmRNA with ribosomes. tmRNA and SmpB together mimic tRNA shape, replacing the anticodon stem-loop with SmpB. tmRNA is encoded by the ssrA gene; the 2 termini fold to resemble tRNA(Ala) and it encodes a 'tag peptide', a short internal open reading frame. During trans-translation Ala-aminoacylated tmRNA acts like a tRNA, entering the A-site of stalled ribosomes, displacing the stalled mRNA. The ribosome then switches to translate the ORF on the tmRNA; the nascent peptide is terminated with the 'tag peptide' encoded by the tmRNA and targeted for degradation. The ribosome is freed to recommence translation, which seems to be the essential function of trans-translation. This chain is SsrA-binding protein, found in Staphylococcus carnosus (strain TM300).